A 586-amino-acid chain; its full sequence is Old nuclease (586 aa).

Positions M1 to T163 are ATPase domain N-terminus. N34 to S38 is an ATP binding site. The segment at T164 to S270 is dimerization domain. The ATPase domain C-terminus stretch occupies residues I271 to F390. Residues E393–I586 are toprim domain. Residues E398, E402, D453, D455, D541, and E543 each coordinate a divalent metal cation. The active-site Stabilizes transition state or protonates leaving group is R570.

Belongs to the class 1 OLD nuclease family. Requires Mg(2+) as cofactor.

It carries out the reaction Exonucleolytic cleavage in the 5'- to 3'-direction to yield nucleoside 5'-phosphates.. Functionally, an exonuclease that acts preferentially on linear dsDNA, processively degrading it from 5'-3', releasing 5'-phosphomononucleotides. Initiates on 5'-phosphate and 5'-hydroxyl ends. Also acts on linear ssDNA, nicked DNA and RNA. ATP enhances but is not necessary for exonuclease activity; has ATPase activity that is not stimulated by DNA. The old protein kills E.coli recB and recC mutants and interferes with phage lambda growth. Both the exonuclease and ATPase activities are required in vivo. Probably interferes with lambda phage by degrading its linear DNA. Isolated as a mutant able to lysogenize E.coli strain C cells normally not susceptible to lysis by phage P2. This Enterobacteriaceae (Bacteriophage P2) protein is Old nuclease.